Consider the following 410-residue polypeptide: Cysteine desulfurase IscS (410 aa).

Pyridoxal 5'-phosphate-binding positions include 80–81 (AT), Asn160, Gln188, and 208–210 (SGH). N6-(pyridoxal phosphate)lysine is present on Lys211. Residue Thr248 participates in pyridoxal 5'-phosphate binding. The active-site Cysteine persulfide intermediate is Cys334. Cys334 is a [2Fe-2S] cluster binding site.

Belongs to the class-V pyridoxal-phosphate-dependent aminotransferase family. NifS/IscS subfamily. As to quaternary structure, homodimer. Forms a heterotetramer with IscU, interacts with other sulfur acceptors. Requires pyridoxal 5'-phosphate as cofactor.

It is found in the cytoplasm. It carries out the reaction (sulfur carrier)-H + L-cysteine = (sulfur carrier)-SH + L-alanine. It participates in cofactor biosynthesis; iron-sulfur cluster biosynthesis. Its function is as follows. Master enzyme that delivers sulfur to a number of partners involved in Fe-S cluster assembly, tRNA modification or cofactor biosynthesis. Catalyzes the removal of elemental sulfur atoms from cysteine to produce alanine. Functions as a sulfur delivery protein for Fe-S cluster synthesis onto IscU, an Fe-S scaffold assembly protein, as well as other S acceptor proteins. The sequence is that of Cysteine desulfurase IscS from Rickettsia akari (strain Hartford).